Reading from the N-terminus, the 359-residue chain is tRNA N6-adenosine threonylcarbamoyltransferase (359 aa).

Residues His115 and His119 each coordinate Fe cation. Substrate is bound by residues 137 to 141 (LVSGG), Asp170, Gly183, and Asn283. Fe cation is bound at residue Asp311. The interval 328-359 (APDSLDIAPRSRWPLDEKSAPVFGTGRRGAKA) is disordered.

This sequence belongs to the KAE1 / TsaD family. It depends on Fe(2+) as a cofactor.

It is found in the cytoplasm. It catalyses the reaction L-threonylcarbamoyladenylate + adenosine(37) in tRNA = N(6)-L-threonylcarbamoyladenosine(37) in tRNA + AMP + H(+). Functionally, required for the formation of a threonylcarbamoyl group on adenosine at position 37 (t(6)A37) in tRNAs that read codons beginning with adenine. Is involved in the transfer of the threonylcarbamoyl moiety of threonylcarbamoyl-AMP (TC-AMP) to the N6 group of A37, together with TsaE and TsaB. TsaD likely plays a direct catalytic role in this reaction. The chain is tRNA N6-adenosine threonylcarbamoyltransferase from Brucella abortus (strain S19).